The primary structure comprises 395 residues: E3 ubiquitin-protein ligase RDUF1 (395 aa).

Disordered regions lie at residues 1 to 22 (MMPN…TTTT) and 107 to 130 (PVIV…EGDG). The segment covering 9–22 (TITPTTESTTTTTT) has biased composition (low complexity). Over residues 121–130 (ERVENEEGDG) the composition is skewed to basic and acidic residues. The RING-type; atypical zinc finger occupies 215–256 (CAVCTEVFEAGIEGREMPCKHIFHGDCIVPWLSIRNSCPVCR).

As to expression, expressed in root tips, leaf tips, junction of carpels and pedicels, stigma, anthers, pollen, vasculature of sepals and petals, immature seeds and embryos.

The protein localises to the cytoplasm. It localises to the cytosol. It is found in the nucleus. It carries out the reaction S-ubiquitinyl-[E2 ubiquitin-conjugating enzyme]-L-cysteine + [acceptor protein]-L-lysine = [E2 ubiquitin-conjugating enzyme]-L-cysteine + N(6)-ubiquitinyl-[acceptor protein]-L-lysine.. It participates in protein modification; protein ubiquitination. Functionally, E3 ubiquitin-protein ligase involved in the positive regulation of abscisic acid-dependent drought stress responses. Involved in the positive regulation of responses to salt and osmotic stresses during seed germination and early seedling development. Possesses E3 ubiquitin ligase activity in vitro. The chain is E3 ubiquitin-protein ligase RDUF1 from Arabidopsis thaliana (Mouse-ear cress).